Here is a 360-residue protein sequence, read N- to C-terminus: DNA replication and repair protein RecF (360 aa).

Position 33 to 40 (33 to 40) interacts with ATP; sequence GENGSGKT.

The protein belongs to the RecF family.

The protein localises to the cytoplasm. Its function is as follows. The RecF protein is involved in DNA metabolism; it is required for DNA replication and normal SOS inducibility. RecF binds preferentially to single-stranded, linear DNA. It also seems to bind ATP. The chain is DNA replication and repair protein RecF from Rickettsia rickettsii (strain Iowa).